The following is a 708-amino-acid chain: Metal-pseudopaline receptor CntO (708 aa).

The N-terminal stretch at 1–21 is a signal peptide; that stretch reads MRVSVSLVLGVGLGCSSPALW. A TBDR plug domain is found at 63–169; that stretch reads RIEDIPQAIS…PGGTVNLVTK (107 aa). One can recognise a TBDR beta-barrel domain in the interval 174–708; it reads ERFARLHASA…NLTMSLTLNY (535 aa).

It belongs to the TonB-dependent receptor family.

Its subcellular location is the cell outer membrane. In terms of biological role, transports the metallophore pseudopaline, which is involved in the acquisition of nickel and zinc, and thus enables bacterial growth inside the host, where metal access is limited. Is probably involved in the import of pseudopaline-metal complexes. In Pseudomonas aeruginosa (strain UCBPP-PA14), this protein is Metal-pseudopaline receptor CntO.